A 501-amino-acid chain; its full sequence is L-lysine transport protein (501 aa).

13 helical membrane-spanning segments follow: residues 25-41 (LIAL…IFSI), 52-76 (GAML…HVLA), 92-113 (VGLG…SVIA), 138-155 (FVSA…FGVV), 174-191 (ILPL…GFSW), 214-232 (GIMV…ASVY), 247-269 (VIGF…GVLT), 292-316 (WGAA…QMLC), 340-362 (GAAW…IFFL), 377-393 (LYLV…VMLA), 424-440 (LIVG…LFYA), 447-463 (LFGA…YVWT), and 477-495 (IGVV…IGLV).

It belongs to the amino acid-polyamine-organocation (APC) superfamily. Basic amino acid/polyamine antiporter (APA) (TC 2.A.3.2) family.

The protein resides in the cell membrane. Its function is as follows. Permease that is involved in the transport across the membrane of lysine. This Corynebacterium glutamicum (strain ATCC 13032 / DSM 20300 / JCM 1318 / BCRC 11384 / CCUG 27702 / LMG 3730 / NBRC 12168 / NCIMB 10025 / NRRL B-2784 / 534) protein is L-lysine transport protein (lysI).